We begin with the raw amino-acid sequence, 375 residues long: Protein NDRG3 (375 aa).

The disordered stretch occupies residues Arg-326 to Cys-375. Residues Ser-348–Gln-363 are compositionally biased toward low complexity. Residues Ile-364–Cys-375 show a composition bias toward polar residues.

This sequence belongs to the NDRG family.

This chain is Protein NDRG3, found in Xenopus laevis (African clawed frog).